The sequence spans 638 residues: Methionine--tRNA ligase (638 aa).

The 'HIGH' region signature appears at 12–22 (YYPSDKLHIGH). Residues Cys127, Cys130, Cys144, and Cys147 each contribute to the Zn(2+) site. The 'KMSKS' region motif lies at 296–300 (KMSKS). Residue Lys299 participates in ATP binding. One can recognise a tRNA-binding domain in the interval 538-638 (DFSKVQLRVA…KDIESGSKIS (101 aa)).

This sequence belongs to the class-I aminoacyl-tRNA synthetase family. MetG type 2A subfamily. In terms of assembly, homodimer. Requires Zn(2+) as cofactor.

It is found in the cytoplasm. It catalyses the reaction tRNA(Met) + L-methionine + ATP = L-methionyl-tRNA(Met) + AMP + diphosphate. Is required not only for elongation of protein synthesis but also for the initiation of all mRNA translation through initiator tRNA(fMet) aminoacylation. In Caldanaerobacter subterraneus subsp. tengcongensis (strain DSM 15242 / JCM 11007 / NBRC 100824 / MB4) (Thermoanaerobacter tengcongensis), this protein is Methionine--tRNA ligase (metG).